A 593-amino-acid polypeptide reads, in one-letter code: Multidrug resistance-like ATP-binding protein MdlB (593 aa).

Over 1–25 (MRSFSQLWPTLKRLLAYGSPWRKPL) the chain is Cytoplasmic. The region spanning 25-310 (LGIAVLMMWV…LTTQQAMLQQ (286 aa)) is the ABC transmembrane type-1 domain. Residues 26-46 (GIAVLMMWVAAAAEVSGPLLI) form a helical membrane-spanning segment. Residues 47–62 (SYFIDNMVAKNNLPLK) are Periplasmic-facing. The chain crosses the membrane as a helical span at residues 63 to 83 (VVAGLAAAYVGLQLFAAGLHY). Over 84 to 140 (AQSLLFNRAAVGVVQQLRTDVMDAALRQPLSEFDTQPVGQVISRVTNDTEVIRDLYV) the chain is Cytoplasmic. The chain crosses the membrane as a helical span at residues 141-161 (TVVATVLRSAALVGAMLVAMF). Over 162 to 164 (SLD) the chain is Periplasmic. Residues 165–185 (WRMALVAIMIFPVVLVVMVIY) traverse the membrane as a helical segment. Residues 186–254 (QRYSTPIVRR…LRLDGFLLRP (69 aa)) are Cytoplasmic-facing. Residues 255–275 (LLSLFSSLILCGLLMLFGFSA) form a helical membrane-spanning segment. The Periplasmic segment spans residues 276–278 (SGT). Residues 279-299 (IEVGVLYAFISYLGRLNEPLI) form a helical membrane-spanning segment. Topologically, residues 300 to 593 (ELTTQQAMLQ…SVREEESLSA (294 aa)) are cytoplasmic. The 234-residue stretch at 341–574 (IEVDNVSFAY…QGRYWQMYQL (234 aa)) folds into the ABC transporter domain. 374-381 (GHTGSGKS) lines the ATP pocket.

The protein belongs to the ABC transporter superfamily. Drug exporter-2 (TC 3.A.1.117) family.

It is found in the cell inner membrane. It carries out the reaction ATP + H2O + xenobioticSide 1 = ADP + phosphate + xenobioticSide 2.. The polypeptide is Multidrug resistance-like ATP-binding protein MdlB (mdlB) (Escherichia coli O6:H1 (strain CFT073 / ATCC 700928 / UPEC)).